A 359-amino-acid chain; its full sequence is Acetoin catabolism protein X (359 aa).

The protein resides in the cell membrane. It functions in the pathway ketone degradation; acetoin degradation. Functionally, essential for acetoin catabolism. The protein is Acetoin catabolism protein X (acoX) of Cupriavidus necator (strain ATCC 17699 / DSM 428 / KCTC 22496 / NCIMB 10442 / H16 / Stanier 337) (Ralstonia eutropha).